A 274-amino-acid polypeptide reads, in one-letter code: NH(3)-dependent NAD(+) synthetase (274 aa).

Residue 46–53 (GISGGQDS) coordinates ATP. A Mg(2+)-binding site is contributed by aspartate 52. Arginine 140 is a deamido-NAD(+) binding site. Residue threonine 160 participates in ATP binding. Glutamate 165 is a Mg(2+) binding site. Deamido-NAD(+)-binding residues include lysine 173 and aspartate 180. Residues lysine 189 and threonine 211 each coordinate ATP. 260–261 (HK) provides a ligand contact to deamido-NAD(+).

It belongs to the NAD synthetase family. As to quaternary structure, homodimer.

It catalyses the reaction deamido-NAD(+) + NH4(+) + ATP = AMP + diphosphate + NAD(+) + H(+). Its pathway is cofactor biosynthesis; NAD(+) biosynthesis; NAD(+) from deamido-NAD(+) (ammonia route): step 1/1. Catalyzes the ATP-dependent amidation of deamido-NAD to form NAD. Uses ammonia as a nitrogen source. The chain is NH(3)-dependent NAD(+) synthetase from Streptococcus pneumoniae (strain Hungary19A-6).